A 520-amino-acid chain; its full sequence is 2-isopropylmalate synthase (520 aa).

The 264-residue stretch at 5-268 (VYIFDTTLRD…YTDVNTKEIY (264 aa)) folds into the Pyruvate carboxyltransferase domain. Residues Asp14, His202, His204, and Asn238 each coordinate Mn(2+). The interval 394-520 (KVLHFQVQSG…RQEIREEGTV (127 aa)) is regulatory domain.

The protein belongs to the alpha-IPM synthase/homocitrate synthase family. LeuA type 1 subfamily. Homodimer. It depends on Mn(2+) as a cofactor.

The protein localises to the cytoplasm. The enzyme catalyses 3-methyl-2-oxobutanoate + acetyl-CoA + H2O = (2S)-2-isopropylmalate + CoA + H(+). Its pathway is amino-acid biosynthesis; L-leucine biosynthesis; L-leucine from 3-methyl-2-oxobutanoate: step 1/4. Catalyzes the condensation of the acetyl group of acetyl-CoA with 3-methyl-2-oxobutanoate (2-ketoisovalerate) to form 3-carboxy-3-hydroxy-4-methylpentanoate (2-isopropylmalate). In Aquifex aeolicus (strain VF5), this protein is 2-isopropylmalate synthase.